Here is a 201-residue protein sequence, read N- to C-terminus: Recombination protein RecR (201 aa).

The segment at 57-72 adopts a C4-type zinc-finger fold; the sequence is CKSCRTFTEEDECAIC. One can recognise a Toprim domain in the interval 81–176; that stretch reads GQLCVVEMPA…KVTRIAHGIP (96 aa).

This sequence belongs to the RecR family.

Functionally, may play a role in DNA repair. It seems to be involved in an RecBC-independent recombinational process of DNA repair. It may act with RecF and RecO. The protein is Recombination protein RecR of Glaesserella parasuis serovar 5 (strain SH0165) (Haemophilus parasuis).